A 180-amino-acid polypeptide reads, in one-letter code: MSRIGLQQLNNSARNSPFGSEKATGTKQIPEPLKLTAQLKKYQPITPSPLASATTITPVLSPFDVFCDDDQEAKNVETQMFEYGTVSTQTIINVPHVQPKITEADLTSEKPTVNYLRVMADRLQMDLDDEMDRNQRLVAELGDLDEKMRKIDDDTEILLEVLADIDEEQQTDEEIGTAQL.

Residues 1–27 (MSRIGLQQLNNSARNSPFGSEKATGTK) show a composition bias toward polar residues. The interval 1–29 (MSRIGLQQLNNSARNSPFGSEKATGTKQI) is disordered.

Belongs to the geminin family. As to quaternary structure, homodimer. Interacts with cdt-1; the interaction most likely inhibits the ability of cdt-1 to load the mini-chromosome maintenance (MCM) complex onto DNA and therefore reduces DNA replication licensing activity. Interacts with nob-1 and ceh-32.

Its subcellular location is the cytoplasm. It localises to the nucleus. Its function is as follows. Inhibits DNA replication by binding to the DNA replication licensing factor cdt-1. Its interaction with cdt-1 prevents the cdt-1 loading of the mini-chromosome maintenance (MCM) complex onto DNA and therefore DNA replication licencing. The protein is Geminin homolog of Caenorhabditis elegans.